Consider the following 998-residue polypeptide: Probable protein kinase DDB_G0277539 (998 aa).

Disordered regions lie at residues M1–Q34, C65–F207, I265–S284, S316–S367, E380–I420, and R435–N489. Residues Y23–F32 show a composition bias toward acidic residues. Positions Q70–N139 are enriched in low complexity. The span at S140–R150 shows a compositional bias: basic residues. Residues A166 to P177 are compositionally biased toward polar residues. Composition is skewed to low complexity over residues S184 to Q203 and I265 to N274. Residues S316–S328 are compositionally biased toward polar residues. Residues E330 to A340 show a composition bias toward basic and acidic residues. 2 stretches are compositionally biased toward low complexity: residues N393–N415 and N450–N489. Positions F508–I849 constitute a Protein kinase domain. ATP is bound by residues I514 to V522 and K537. D631 serves as the catalytic Proton acceptor. Mg(2+)-binding residues include N636 and E677.

The protein belongs to the protein kinase superfamily. Ser/Thr protein kinase family. WEE1 subfamily.

The catalysed reaction is L-seryl-[protein] + ATP = O-phospho-L-seryl-[protein] + ADP + H(+). It carries out the reaction L-threonyl-[protein] + ATP = O-phospho-L-threonyl-[protein] + ADP + H(+). This Dictyostelium discoideum (Social amoeba) protein is Probable protein kinase DDB_G0277539.